A 644-amino-acid chain; its full sequence is Protein cueball (644 aa).

An N-terminal signal peptide occupies residues Met-1–Gly-26. Residues Thr-27–Ser-531 are Extracellular-facing. 2 N-linked (GlcNAc...) asparagine glycosylation sites follow: Asn-82 and Asn-108. LDL-receptor class B repeat units lie at residues Met-121–Arg-166, Arg-167–Ser-211, and Asp-212–Ala-257. N-linked (GlcNAc...) asparagine glycans are attached at residues Asn-175 and Asn-190. Residue Asn-313 is glycosylated (N-linked (GlcNAc...) asparagine). EGF-like domains follow at residues Glu-398–Glu-430 and Glu-433–Glu-471. Cystine bridges form between Cys-402-Cys-411, Cys-406-Cys-421, Cys-437-Cys-447, Cys-441-Cys-459, and Cys-461-Cys-470. 2 N-linked (GlcNAc...) asparagine glycosylation sites follow: Asn-473 and Asn-508. Residues Ser-532–Val-552 form a helical membrane-spanning segment. Residues His-553–Tyr-644 are Cytoplasmic-facing.

The protein belongs to the cueball family.

The protein localises to the cell membrane. Functionally, has a role in spermatogenesis and oogenesis. In Drosophila simulans (Fruit fly), this protein is Protein cueball.